Consider the following 416-residue polypeptide: Multifunctional CCA protein (416 aa).

ATP is bound by residues glycine 8 and arginine 11. Residues glycine 8 and arginine 11 each coordinate CTP. 2 residues coordinate Mg(2+): aspartate 21 and aspartate 23. ATP is bound by residues arginine 91, arginine 137, and arginine 140. CTP contacts are provided by arginine 91, arginine 137, and arginine 140. Residues 228-329 (TGVHTLMVLA…VKIFDKADFW (102 aa)) form the HD domain.

It belongs to the tRNA nucleotidyltransferase/poly(A) polymerase family. Bacterial CCA-adding enzyme type 1 subfamily. Monomer. Can also form homodimers and oligomers. Mg(2+) serves as cofactor. The cofactor is Ni(2+).

The enzyme catalyses a tRNA precursor + 2 CTP + ATP = a tRNA with a 3' CCA end + 3 diphosphate. It carries out the reaction a tRNA with a 3' CCA end + 2 CTP + ATP = a tRNA with a 3' CCACCA end + 3 diphosphate. Catalyzes the addition and repair of the essential 3'-terminal CCA sequence in tRNAs without using a nucleic acid template. Adds these three nucleotides in the order of C, C, and A to the tRNA nucleotide-73, using CTP and ATP as substrates and producing inorganic pyrophosphate. tRNA 3'-terminal CCA addition is required both for tRNA processing and repair. Also involved in tRNA surveillance by mediating tandem CCA addition to generate a CCACCA at the 3' terminus of unstable tRNAs. While stable tRNAs receive only 3'-terminal CCA, unstable tRNAs are marked with CCACCA and rapidly degraded. This Shewanella baltica (strain OS223) protein is Multifunctional CCA protein.